The sequence spans 189 residues: Early E3 20.5 kDa glycoprotein (189 aa).

N-linked (GlcNAc...) asparagine; by host glycosylation is found at asparagine 73 and asparagine 137.

It belongs to the adenoviridae E3_20 family.

In terms of biological role, E3 proteins seem to be dispensable for virus growth in tissue culture cells. They are potentially important for virus growth under special conditions; E3 region may help adenoviruses to evade the immune surveillance of the host. This is Early E3 20.5 kDa glycoprotein from Human adenovirus B serotype 3 (HAdV-3).